The sequence spans 450 residues: Vimentin beta (450 aa).

Residues 1 to 81 (MSSRTSTSSY…FGLADAINTE (81 aa)) are head. The span at 24–38 (STYSSRQYSSPGRTT) shows a compositional bias: polar residues. Residues 24–56 (STYSSRQYSSPGRTTSRVSYSSASSTSPSLYMS) form a disordered region. Positions 39–56 (SRVSYSSASSTSPSLYMS) are enriched in low complexity. Residues 82–117 (FKANRTNEKAEMQHVNDRFASYIEEVRFLEQQNKIL) are coil 1A. An IF rod domain is found at 89 to 397 (EKAEMQHVND…NLLEGEEYRI (309 aa)). The linker 1 stretch occupies residues 118 to 139 (TAELEQMRGKGSSRVGDLYEDE). A coil 1B region spans residues 140–231 (MRELRRQVDQ…KLHDEELAEL (92 aa)). Residues 232-254 (QMQIQERHVQIDMEVAKPDLTAA) are linker 12. The interval 255–393 (LRDVRQQYET…ATYRNLLEGE (139 aa)) is coil 2. Residues 394-450 (EYRITTPFPNLSSLSLRESMKEIRPAMDSLSKKVVIKTIETRDGHIINQSTQKDNLE) form a tail region.

This sequence belongs to the intermediate filament family. As to quaternary structure, homomer. In terms of processing, one of the most prominent phosphoproteins in various cells of mesenchymal origin. Phosphorylation is enhanced during cell division, at which time vimentin filaments are significantly reorganized. Expressed in low amounts in retina, optic nerve, brain, and spinal cord and in very high amounts in eye lens.

Its function is as follows. Vimentins are class-III intermediate filaments found in various non-epithelial cells, especially mesenchymal cells. Vimentin is attached to the nucleus, endoplasmic reticulum, and mitochondria, either laterally or terminally. The chain is Vimentin beta from Carassius auratus (Goldfish).